Reading from the N-terminus, the 425-residue chain is MTKALDGVRILDFTHVQSGPTCTQLLAWFGADVIKVERPGTGDITRGQLQDIPKVDSLYFTMLNHNKRSITLDTKNPKGKEVLTALIRSCDVLVENFGPGVLDRMGFTWDKIQEINPRMIVASIKGFGPGPYEDCKVYENVAQCTGGAASTTGFRDGPPLVTGAQIGDSGTGLHLALGIVTALYQRHHTGRGQRVTAAMQDGVLNLSRVKLRDQQRLAHGPLKEYSQFGEGIPFGDAVPRAGNDSGGGQPGRILKCKGWETDPNAYIYFIAQAPVWEKICDVIGETGWKTHPDYATPPARLKHLNDIFARIEQWTMTKTKFEAMDILNRDDIPCGPILSMKELAEDASLRATGTIVEVDHPTRGKYLSVGNPIKLSDSPTHVERSPLLGEHTDEILRDVLGFNDHQVAEIHDSGALAPPRKQAAE.

Residues 17-18, Arg38, 72-75, 96-98, Arg104, and 136-139 each bind CoA; these read QS, LDTK, NFG, and KVYE. Asp168 functions as the Nucleophile in the catalytic mechanism. 247–249 contacts substrate; that stretch reads GGQ.

The protein belongs to the CoA-transferase III family. Frc subfamily. In terms of assembly, homodimer.

The enzyme catalyses formyl-CoA + oxalate = oxalyl-CoA + formate. It participates in metabolic intermediate degradation; oxalate degradation; CO(2) and formate from oxalate: step 1/2. Involved in the catabolism of oxalate and in the adapatation to low pH via the induction of the oxalate-dependent acid tolerance response (ATR). Catalyzes the transfer of the CoA moiety from formyl-CoA to oxalate. This is Formyl-CoA:oxalate CoA-transferase from Rhodopseudomonas palustris (strain HaA2).